A 491-amino-acid chain; its full sequence is MANYFNTLNLRQQLAQLGKCRFMGRDEFADGASYLQGKKVVIVGCGAQGLNQGLNMRDSGLDISYALRKEAIAEKRASWRKATENGFKVGTYEELIPQADLVVNLTPDKQHSDVVHTVQPLMKDGAALGYSHGFNIVEVGEQIRKDITVVMVAPKCPGTEVREEYKRGFGVPTLIAVHPENDPKGEGMAIAKAWAAATGGHRAGVLESSFVAEVKSDLMGEQTILCGMLQAGSLLCFDRLVEEGTDPAYAEKLIQFGWETITEALKQGGITLMMDRLSNPAKLRAYALSEQLKEIMAPLFQKHMDDIISGEFSSGMMADWANDDKKLLTWREETGKTAFETAPQYEGKIGEQEYFDKGVLMIAMVKAGVELAFETMVDSGIIEESAYYESLHELPLIANTIARKRLYEMNVVISDTAEYGNYLFSYACVPLLKPFMAELQPGDLGKAIPEGAVDNAQLRDVNEAIRSHAIEQVGKKLRGYMTDMKRIAVAG.

One can recognise a KARI N-terminal Rossmann domain in the interval 15–208 (AQLGKCRFMG…GGHRAGVLES (194 aa)). NADP(+) contacts are provided by residues 45-48 (CGAQ), R68, R76, S78, and 108-110 (DKQ). H132 is a catalytic residue. Position 158 (G158) interacts with NADP(+). 2 consecutive KARI C-terminal knotted domains span residues 209 to 344 (SFVA…TAPQ) and 345 to 484 (YEGK…MTDM). Residues D217, E221, E389, and E393 each contribute to the Mg(2+) site. A substrate-binding site is contributed by S414.

The protein belongs to the ketol-acid reductoisomerase family. Requires Mg(2+) as cofactor.

The enzyme catalyses (2R)-2,3-dihydroxy-3-methylbutanoate + NADP(+) = (2S)-2-acetolactate + NADPH + H(+). The catalysed reaction is (2R,3R)-2,3-dihydroxy-3-methylpentanoate + NADP(+) = (S)-2-ethyl-2-hydroxy-3-oxobutanoate + NADPH + H(+). It participates in amino-acid biosynthesis; L-isoleucine biosynthesis; L-isoleucine from 2-oxobutanoate: step 2/4. It functions in the pathway amino-acid biosynthesis; L-valine biosynthesis; L-valine from pyruvate: step 2/4. In terms of biological role, involved in the biosynthesis of branched-chain amino acids (BCAA). Catalyzes an alkyl-migration followed by a ketol-acid reduction of (S)-2-acetolactate (S2AL) to yield (R)-2,3-dihydroxy-isovalerate. In the isomerase reaction, S2AL is rearranged via a Mg-dependent methyl migration to produce 3-hydroxy-3-methyl-2-ketobutyrate (HMKB). In the reductase reaction, this 2-ketoacid undergoes a metal-dependent reduction by NADPH to yield (R)-2,3-dihydroxy-isovalerate. In Escherichia coli O7:K1 (strain IAI39 / ExPEC), this protein is Ketol-acid reductoisomerase (NADP(+)).